The chain runs to 134 residues: Orexigenic neuropeptide QRFP (134 aa).

Positions 1–18 are cleaved as a signal peptide; it reads MRSPYSLPYLLFLPLGAC. Positions 19–88 are excised as a propeptide; sequence FPVLDTEEPV…RAGFQLRLGR (70 aa). Phe131 carries the post-translational modification Phenylalanine amide.

This sequence belongs to the RFamide neuropeptide family. In terms of assembly, ligand for the G-protein coupled receptor QRFPR/GPR103. As to expression, expressed in the hypothalamus.

Its subcellular location is the secreted. Functionally, stimulates feeding behavior, metabolic rate and locomotor activity and increases blood pressure. May have orexigenic activity. May promote aldosterone secretion by the adrenal gland. The polypeptide is Orexigenic neuropeptide QRFP (Bos taurus (Bovine)).